Here is a 336-residue protein sequence, read N- to C-terminus: Probable assembly chaperone of rpl4 (336 aa).

TPR repeat units lie at residues 39-72 (GRAF…SKNL), 75-108 (DQGY…LERL), 110-143 (IDKG…QPDA), and 162-195 (AEAL…ISRA). Positions 316–336 (DEENEEAEWETSENEEEMDED) are disordered.

This sequence belongs to the ACL4 family.

It localises to the cytoplasm. Its subcellular location is the nucleus. It is found in the nucleolus. Its function is as follows. Acts as a chaperone for the L4 ribosomal subunit encoded by rpl4A and rpl4B, required for hierarchical ribosome assembly. Shields ribosomal protein L4 until timely release and insertion into the pre-ribosome is possible, once ribosomal protein L18 is present. This Schizosaccharomyces pombe (strain 972 / ATCC 24843) (Fission yeast) protein is Probable assembly chaperone of rpl4.